Here is a 436-residue protein sequence, read N- to C-terminus: UPF0597 protein YhaM (436 aa).

Belongs to the UPF0597 family.

The sequence is that of UPF0597 protein YhaM from Escherichia coli (strain 55989 / EAEC).